The sequence spans 414 residues: Succinylornithine transaminase (414 aa).

Residue Lys260 is modified to N6-(pyridoxal phosphate)lysine.

It belongs to the class-III pyridoxal-phosphate-dependent aminotransferase family. AstC subfamily. Requires pyridoxal 5'-phosphate as cofactor.

The catalysed reaction is N(2)-succinyl-L-ornithine + 2-oxoglutarate = N-succinyl-L-glutamate 5-semialdehyde + L-glutamate. Its pathway is amino-acid degradation; L-arginine degradation via AST pathway; L-glutamate and succinate from L-arginine: step 3/5. Catalyzes the transamination of N(2)-succinylornithine and alpha-ketoglutarate into N(2)-succinylglutamate semialdehyde and glutamate. Can also act as an acetylornithine aminotransferase. In Yersinia pestis bv. Antiqua (strain Antiqua), this protein is Succinylornithine transaminase.